The chain runs to 249 residues: U2 small nuclear ribonucleoprotein A' (249 aa).

LRR repeat units follow at residues 20–41 (KERELDLRGNKIPVIENLGATE), 43–64 (QFDTIDLSDNEIVKLENFPYLN), 65–87 (RLGTLLINNNRITRINPNLGEFL), and 89–110 (KLHSLVLTNNRLVNLVEIDPLA). The LRRCT domain maps to 123–161 (NNITKKANYRLYVIHKLKSLRVLDFIKIKAKERAEAASL).

This sequence belongs to the U2 small nuclear ribonucleoprotein A family.

It is found in the nucleus. The protein resides in the nucleus speckle. This protein is associated with sn-RNP U2. It helps the A' protein to bind stem loop IV of U2 snRNA. The protein is U2 small nuclear ribonucleoprotein A' of Arabidopsis thaliana (Mouse-ear cress).